We begin with the raw amino-acid sequence, 166 residues long: Probable chemoreceptor glutamine deamidase CheD (166 aa).

This sequence belongs to the CheD family.

It catalyses the reaction L-glutaminyl-[protein] + H2O = L-glutamyl-[protein] + NH4(+). Its function is as follows. Probably deamidates glutamine residues to glutamate on methyl-accepting chemotaxis receptors (MCPs), playing an important role in chemotaxis. The polypeptide is Probable chemoreceptor glutamine deamidase CheD (Clostridium acetobutylicum (strain ATCC 824 / DSM 792 / JCM 1419 / IAM 19013 / LMG 5710 / NBRC 13948 / NRRL B-527 / VKM B-1787 / 2291 / W)).